A 325-amino-acid chain; its full sequence is DNA repair and recombination protein RadA (325 aa).

ATP is bound at residue 107 to 114 (GEFGSGKT).

Belongs to the eukaryotic RecA-like protein family.

Functionally, involved in DNA repair and in homologous recombination. Binds and assemble on single-stranded DNA to form a nucleoprotein filament. Hydrolyzes ATP in a ssDNA-dependent manner and promotes DNA strand exchange between homologous DNA molecules. This is DNA repair and recombination protein RadA from Methanosarcina acetivorans (strain ATCC 35395 / DSM 2834 / JCM 12185 / C2A).